A 126-amino-acid chain; its full sequence is Heterotrimeric G protein gamma subunit GPG1 (126 aa).

As to quaternary structure, g proteins are composed of 3 units, alpha, beta and gamma. GPG1 interacts with the beta subunits GBP1 and GPB2.

The protein localises to the cytoplasm. Its function is as follows. Gamma subunit of a guanine nucleotide-binding protein (G protein). G proteins are involved as modulators or transducers in various transmembrane signaling systems. The beta and gamma chains are required for the GTPase activity, for replacement of GDP by GTP, and for G protein-effector interaction. Involved in the determination of the cAMP level according to nutritional conditions, most probably as a regulator of cAMP phosphodiesterase. Required for the control of pseudohyphal and haploid invasive growth. The protein is Heterotrimeric G protein gamma subunit GPG1 (GPG1) of Saccharomyces cerevisiae (strain ATCC 204508 / S288c) (Baker's yeast).